A 283-amino-acid chain; its full sequence is DNA repair protein RecO (283 aa).

Belongs to the RecO family.

In terms of biological role, involved in DNA repair and RecF pathway recombination. The polypeptide is DNA repair protein RecO (Gloeothece citriformis (strain PCC 7424) (Cyanothece sp. (strain PCC 7424))).